The chain runs to 347 residues: 4-hydroxy-3-methylbut-2-en-1-yl diphosphate synthase (flavodoxin) (347 aa).

[4Fe-4S] cluster is bound by residues C259, C262, C294, and E301.

This sequence belongs to the IspG family. [4Fe-4S] cluster is required as a cofactor.

It carries out the reaction (2E)-4-hydroxy-3-methylbut-2-enyl diphosphate + oxidized [flavodoxin] + H2O + 2 H(+) = 2-C-methyl-D-erythritol 2,4-cyclic diphosphate + reduced [flavodoxin]. It functions in the pathway isoprenoid biosynthesis; isopentenyl diphosphate biosynthesis via DXP pathway; isopentenyl diphosphate from 1-deoxy-D-xylulose 5-phosphate: step 5/6. Functionally, converts 2C-methyl-D-erythritol 2,4-cyclodiphosphate (ME-2,4cPP) into 1-hydroxy-2-methyl-2-(E)-butenyl 4-diphosphate. This Caldicellulosiruptor saccharolyticus (strain ATCC 43494 / DSM 8903 / Tp8T 6331) protein is 4-hydroxy-3-methylbut-2-en-1-yl diphosphate synthase (flavodoxin).